The sequence spans 463 residues: Ribulose bisphosphate carboxylase (463 aa).

Asparagine 116 is a substrate binding site. Catalysis depends on lysine 171, which acts as the Proton acceptor. Lysine 173 serves as a coordination point for substrate. Positions 196, 198, and 199 each coordinate Mg(2+). Lysine 196 is subject to N6-carboxylysine. Histidine 294 acts as the Proton acceptor in catalysis. Substrate-binding residues include arginine 295, histidine 328, and serine 375.

This sequence belongs to the RuBisCO large chain family. Type II subfamily. In terms of assembly, homodimer. Mg(2+) is required as a cofactor.

The enzyme catalyses 2 (2R)-3-phosphoglycerate + 2 H(+) = D-ribulose 1,5-bisphosphate + CO2 + H2O. It catalyses the reaction D-ribulose 1,5-bisphosphate + O2 = 2-phosphoglycolate + (2R)-3-phosphoglycerate + 2 H(+). In terms of biological role, ruBisCO catalyzes two reactions: the carboxylation of D-ribulose 1,5-bisphosphate, the primary event in carbon dioxide fixation, as well as the oxidative fragmentation of the pentose substrate. Both reactions occur simultaneously and in competition at the same active site. The protein is Ribulose bisphosphate carboxylase of Hydrogenovibrio marinus.